A 256-amino-acid chain; its full sequence is Thiazole synthase (256 aa).

Lys96 acts as the Schiff-base intermediate with DXP in catalysis. 1-deoxy-D-xylulose 5-phosphate is bound by residues Gly157, 183 to 184 (AG), and 205 to 206 (NT).

The protein belongs to the ThiG family. Homotetramer. Forms heterodimers with either ThiH or ThiS.

It localises to the cytoplasm. The catalysed reaction is [ThiS sulfur-carrier protein]-C-terminal-Gly-aminoethanethioate + 2-iminoacetate + 1-deoxy-D-xylulose 5-phosphate = [ThiS sulfur-carrier protein]-C-terminal Gly-Gly + 2-[(2R,5Z)-2-carboxy-4-methylthiazol-5(2H)-ylidene]ethyl phosphate + 2 H2O + H(+). The protein operates within cofactor biosynthesis; thiamine diphosphate biosynthesis. In terms of biological role, catalyzes the rearrangement of 1-deoxy-D-xylulose 5-phosphate (DXP) to produce the thiazole phosphate moiety of thiamine. Sulfur is provided by the thiocarboxylate moiety of the carrier protein ThiS. In vitro, sulfur can be provided by H(2)S. This chain is Thiazole synthase, found in Clostridioides difficile (strain 630) (Peptoclostridium difficile).